The following is a 497-amino-acid chain: Inactive metallocarboxypeptidase ecm14 (497 aa).

A signal peptide spans M1–G28. The propeptide occupies K29–T148. A Peptidase M14 domain is found at S182 to I492. Residues H248 and E251 each coordinate Zn(2+). Residues H248 to E251 and D323 to A324 contribute to the substrate site. An intrachain disulfide couples C317 to C337. H377 contributes to the Zn(2+) binding site. S378–Y379 contributes to the substrate binding site.

It belongs to the peptidase M14 family. Zn(2+) is required as a cofactor.

The protein localises to the endoplasmic reticulum. The protein resides in the secreted. In terms of biological role, inactive carboxypeptidase that may play a role in cell wall organization and biogenesis. The sequence is that of Inactive metallocarboxypeptidase ecm14 from Schizosaccharomyces pombe (strain 972 / ATCC 24843) (Fission yeast).